The following is a 344-amino-acid chain: Ferrochelatase (344 aa).

Fe cation contacts are provided by histidine 190 and glutamate 270.

It belongs to the ferrochelatase family.

It localises to the cytoplasm. The catalysed reaction is heme b + 2 H(+) = protoporphyrin IX + Fe(2+). Its pathway is porphyrin-containing compound metabolism; protoheme biosynthesis; protoheme from protoporphyrin-IX: step 1/1. Functionally, catalyzes the ferrous insertion into protoporphyrin IX. This chain is Ferrochelatase, found in Rickettsia felis (strain ATCC VR-1525 / URRWXCal2) (Rickettsia azadi).